The sequence spans 130 residues: Small ribosomal subunit protein uS9 (130 aa).

It belongs to the universal ribosomal protein uS9 family.

The polypeptide is Small ribosomal subunit protein uS9 (Buchnera aphidicola subsp. Baizongia pistaciae (strain Bp)).